Reading from the N-terminus, the 146-residue chain is MGRLIFVSFGLLVVFLSLSGTAADCLSGWSSYEGHCYKPFNELKNWADAENFCTQQHAGGHLVSFQSSEEADFVVKLAFETFGHSIFWMGLSNVWNQCNWQWSNAAMLRYKAWAEESYCVYFKSTNNKWRSRSCRMMANFVCEFQV.

Residues 1–23 form the signal peptide; sequence MGRLIFVSFGLLVVFLSLSGTAA. Cystine bridges form between Cys25–Cys36, Cys53–Cys142, and Cys119–Cys134. In terms of domain architecture, C-type lectin spans 32-143; sequence YEGHCYKPFN…CRMMANFVCE (112 aa).

It belongs to the snaclec family. In terms of assembly, heterodimer of subunits A and B2; disulfide-linked. In terms of tissue distribution, expressed by the venom gland.

The protein localises to the secreted. Its function is as follows. Anticoagulant protein which binds to the gamma-carboxyglutamic acid-domain regions of factors IX (F9) and factor X (F10) in the presence of calcium with a 1 to 1 stoichiometry. The chain is Snaclec coagulation factor IX/factor X-binding protein subunit B2 from Trimeresurus stejnegeri (Chinese green tree viper).